Consider the following 393-residue polypeptide: Probable alpha-1,6-mannosyltransferase MNN10 (393 aa).

Over 1-52 (MSSVPYNSQLPISNHLEYDEDEKKSRGSKLGLKYKMIYWRKTLCSSLARWRK) the chain is Cytoplasmic. Residues 53 to 73 (LILLISLALFLFIWISDSTIS) traverse the membrane as a helical; Signal-anchor for type II membrane protein segment. Residues 74 to 393 (RNPSTTSFQG…RKWYTRFFFP (320 aa)) are Lumenal-facing. Residues 77–97 (STTSFQGQNSNDNKLSNTGSS) are disordered.

Belongs to the glycosyltransferase 34 family. As to quaternary structure, component of the M-Pol II complex composed of ANP1, MNN9, MNN10, MNN11 and HOC1.

Its subcellular location is the endoplasmic reticulum membrane. The protein localises to the golgi apparatus. It localises to the cis-Golgi network membrane. Required for polarized growth and efficient budding. Its function is as follows. The M-Pol II complex possesses alpha-1,6-mannosyltransferase activity and is probably involved in the elongation of the mannan backbone of N-linked glycans on cell wall and periplasmic proteins. This is Probable alpha-1,6-mannosyltransferase MNN10 (MNN10) from Saccharomyces cerevisiae (strain ATCC 204508 / S288c) (Baker's yeast).